Here is a 137-residue protein sequence, read N- to C-terminus: ATP synthase epsilon chain 1 (137 aa).

The protein belongs to the ATPase epsilon chain family. As to quaternary structure, F-type ATPases have 2 components, CF(1) - the catalytic core - and CF(0) - the membrane proton channel. CF(1) has five subunits: alpha(3), beta(3), gamma(1), delta(1), epsilon(1). CF(0) has three main subunits: a, b and c.

The protein localises to the cell inner membrane. Its function is as follows. Produces ATP from ADP in the presence of a proton gradient across the membrane. The sequence is that of ATP synthase epsilon chain 1 (atpC1) from Ralstonia nicotianae (strain ATCC BAA-1114 / GMI1000) (Ralstonia solanacearum).